A 404-amino-acid polypeptide reads, in one-letter code: Probable tRNA sulfurtransferase (404 aa).

The region spanning 60–165 (QPIVEALKLV…DEAAYISYEE (106 aa)) is the THUMP domain. ATP-binding positions include 183-184 (ML), 208-209 (HF), arginine 265, glycine 287, and glutamine 296.

Belongs to the ThiI family.

Its subcellular location is the cytoplasm. The enzyme catalyses [ThiI sulfur-carrier protein]-S-sulfanyl-L-cysteine + a uridine in tRNA + 2 reduced [2Fe-2S]-[ferredoxin] + ATP + H(+) = [ThiI sulfur-carrier protein]-L-cysteine + a 4-thiouridine in tRNA + 2 oxidized [2Fe-2S]-[ferredoxin] + AMP + diphosphate. It carries out the reaction [ThiS sulfur-carrier protein]-C-terminal Gly-Gly-AMP + S-sulfanyl-L-cysteinyl-[cysteine desulfurase] + AH2 = [ThiS sulfur-carrier protein]-C-terminal-Gly-aminoethanethioate + L-cysteinyl-[cysteine desulfurase] + A + AMP + 2 H(+). The protein operates within cofactor biosynthesis; thiamine diphosphate biosynthesis. Functionally, catalyzes the ATP-dependent transfer of a sulfur to tRNA to produce 4-thiouridine in position 8 of tRNAs, which functions as a near-UV photosensor. Also catalyzes the transfer of sulfur to the sulfur carrier protein ThiS, forming ThiS-thiocarboxylate. This is a step in the synthesis of thiazole, in the thiamine biosynthesis pathway. The sulfur is donated as persulfide by IscS. The sequence is that of Probable tRNA sulfurtransferase from Streptococcus pyogenes serotype M2 (strain MGAS10270).